We begin with the raw amino-acid sequence, 305 residues long: Glycine--tRNA ligase alpha subunit (305 aa).

The protein belongs to the class-II aminoacyl-tRNA synthetase family. As to quaternary structure, tetramer of two alpha and two beta subunits.

It is found in the cytoplasm. The enzyme catalyses tRNA(Gly) + glycine + ATP = glycyl-tRNA(Gly) + AMP + diphosphate. The protein is Glycine--tRNA ligase alpha subunit of Streptococcus thermophilus (strain CNRZ 1066).